We begin with the raw amino-acid sequence, 444 residues long: Alpha-(1,3)-fucosyltransferase B (444 aa).

Over 1 to 6 (MRLAQR) the chain is Cytoplasmic. The chain crosses the membrane as a helical; Signal-anchor for type II membrane protein span at residues 7-27 (YGIALVALLMVGATVLFFWSE). Residues 28 to 444 (NIINYENIKF…GNNCSNSSNT (417 aa)) lie on the Lumenal side of the membrane. N-linked (GlcNAc...) asparagine glycans are attached at residues asparagine 279, asparagine 437, and asparagine 440.

Belongs to the glycosyltransferase 10 family.

Its subcellular location is the golgi apparatus. It localises to the golgi stack membrane. It participates in protein modification; protein glycosylation. This Drosophila melanogaster (Fruit fly) protein is Alpha-(1,3)-fucosyltransferase B (FucTB).